The primary structure comprises 174 residues: Probable E3 ubiquitin-protein ligase RHA4A (174 aa).

The RING-type; atypical zinc-finger motif lies at 105–147 (CCVCLGEFELKEELVEMPLCKHIFHLDCIHLWLYSHNTCPLCR). A disordered region spans residues 155–174 (TKTSVDDDNDHPDSPQTSPV).

Expressed in stems, flowers, cauline leaves and roots.

It catalyses the reaction S-ubiquitinyl-[E2 ubiquitin-conjugating enzyme]-L-cysteine + [acceptor protein]-L-lysine = [E2 ubiquitin-conjugating enzyme]-L-cysteine + N(6)-ubiquitinyl-[acceptor protein]-L-lysine.. It participates in protein modification; protein ubiquitination. Functionally, probable E3 ubiquitin-protein ligase that may possess E3 ubiquitin ligase activity in vitro. The protein is Probable E3 ubiquitin-protein ligase RHA4A of Arabidopsis thaliana (Mouse-ear cress).